A 360-amino-acid polypeptide reads, in one-letter code: Decorin (360 aa).

Residues 1-16 (MKATIIFLLVAQVSWA) form the signal peptide. The propeptide occupies 17–30 (GPFQQKGLFDFMLE). O-linked (Xyl...) (glycosaminoglycan) serine glycosylation occurs at Ser-34. 2 cysteine pairs are disulfide-bonded: Cys-55–Cys-61 and Cys-59–Cys-68. 12 LRR repeats span residues 74–94 (EKVPKDLPPDTALLDLQNNKI), 95–118 (TEIKDGDFKNLKNLHTLILINNKI), 119–142 (SKISPGAFAPLVKLERLYLSKNQL), 143–163 (KELPEKMPKTLQELRVHENEI), 164–187 (TKVRKSVFNGLNQMIVVELGTNPL), 188–213 (KSSGIENGAFQGMKKLSYIRIADTNI), 214–234 (TTIPQGLPPSLTELHLDGNKI), 235–258 (TKVDAASLKGLNNLAKLGLSFNSI), 259–282 (SAVDNGSLANTPHLRELHLNNNKL), 283–305 (VKVPGGLADHKYIQVVYLHNNNI), 306–335 (SAIGSNDFCPPGYNTKKASYSGVSLFSNPV), and 336–360 (QYWEIQPSTFRCVYVRAAVQLGNYK). A glycan (N-linked (GlcNAc...) asparagine) is linked at Asn-212. N-linked (GlcNAc...) asparagine glycans are attached at residues Asn-263 and Asn-304. Cys-314 and Cys-347 form a disulfide bridge.

Belongs to the small leucine-rich proteoglycan (SLRP) family. SLRP class I subfamily. Binds to type I and type II collagen, fibronectin and TGF-beta. Forms a ternary complex with MFAP2 and ELN. Interacts with DPT. The attached glycosaminoglycan chain can be either chondroitin 4-sulfate, chondroitin 6-sulfate or dermatan sulfate, depending upon the tissue of origin.

Its subcellular location is the secreted. It localises to the extracellular space. The protein resides in the extracellular matrix. In terms of biological role, may affect the rate of fibrils formation. The sequence is that of Decorin (DCN) from Bos taurus (Bovine).